The primary structure comprises 667 residues: Long-chain-fatty-acid--CoA ligase ACSBG2 (667 aa).

Residues 1–14 (MTQEKKAEDPDRGM) show a composition bias toward basic and acidic residues. The tract at residues 1-20 (MTQEKKAEDPDRGMDTTSAA) is disordered. Residues 227–235 (TSGTTGSPK), 418–423 (EIYGMT), D496, R511, and R624 contribute to the ATP site.

It belongs to the ATP-dependent AMP-binding enzyme family. Bubblegum subfamily.

It localises to the cytoplasm. The protein localises to the membrane. The enzyme catalyses a long-chain fatty acid + ATP + CoA = a long-chain fatty acyl-CoA + AMP + diphosphate. It carries out the reaction (5Z,8Z,11Z,14Z)-eicosatetraenoate + ATP + CoA = (5Z,8Z,11Z,14Z)-eicosatetraenoyl-CoA + AMP + diphosphate. The catalysed reaction is hexadecanoate + ATP + CoA = hexadecanoyl-CoA + AMP + diphosphate. It catalyses the reaction (9Z)-octadecenoate + ATP + CoA = (9Z)-octadecenoyl-CoA + AMP + diphosphate. The enzyme catalyses (9Z,12Z)-octadecadienoate + ATP + CoA = (9Z,12Z)-octadecadienoyl-CoA + AMP + diphosphate. It carries out the reaction tetracosanoate + ATP + CoA = tetracosanoyl-CoA + AMP + diphosphate. In terms of biological role, catalyzes the conversion of fatty acids such as long chain and very long-chain fatty acids to their active form acyl-CoAs for both synthesis of cellular lipids, and degradation via beta-oxidation. Can activate diverse saturated, monosaturated and polyunsaturated fatty acids. Has increased ability to activate oleic and linoleic acid. May play a role in spermatogenesis. The polypeptide is Long-chain-fatty-acid--CoA ligase ACSBG2 (Rattus norvegicus (Rat)).